A 165-amino-acid polypeptide reads, in one-letter code: Large ribosomal subunit protein uL10 (165 aa).

The protein belongs to the universal ribosomal protein uL10 family. As to quaternary structure, part of the ribosomal stalk of the 50S ribosomal subunit. The N-terminus interacts with L11 and the large rRNA to form the base of the stalk. The C-terminus forms an elongated spine to which L12 dimers bind in a sequential fashion forming a multimeric L10(L12)X complex.

Its function is as follows. Forms part of the ribosomal stalk, playing a central role in the interaction of the ribosome with GTP-bound translation factors. The protein is Large ribosomal subunit protein uL10 of Paraburkholderia phymatum (strain DSM 17167 / CIP 108236 / LMG 21445 / STM815) (Burkholderia phymatum).